A 420-amino-acid chain; its full sequence is L-rhamnose isomerase (420 aa).

Mn(2+) contacts are provided by histidine 264, aspartate 296, and aspartate 298.

It belongs to the rhamnose isomerase family. It depends on Mn(2+) as a cofactor.

The protein localises to the cytoplasm. The catalysed reaction is L-rhamnopyranose = L-rhamnulose. The protein operates within carbohydrate degradation; L-rhamnose degradation; glycerone phosphate from L-rhamnose: step 1/3. Functionally, catalyzes the interconversion of L-rhamnose and L-rhamnulose. The sequence is that of L-rhamnose isomerase from Listeria monocytogenes serotype 4b (strain CLIP80459).